A 100-amino-acid chain; its full sequence is Small ribosomal subunit protein uS14c (100 aa).

It belongs to the universal ribosomal protein uS14 family. Part of the 30S ribosomal subunit.

It localises to the plastid. The protein localises to the chloroplast. Binds 16S rRNA, required for the assembly of 30S particles. This chain is Small ribosomal subunit protein uS14c, found in Calycanthus floridus var. glaucus (Eastern sweetshrub).